Consider the following 260-residue polypeptide: Ubiquinone/menaquinone biosynthesis C-methyltransferase UbiE (260 aa).

Residues Thr-83, Asp-104, and 132–133 contribute to the S-adenosyl-L-methionine site; that span reads NA.

Belongs to the class I-like SAM-binding methyltransferase superfamily. MenG/UbiE family.

The enzyme catalyses a 2-demethylmenaquinol + S-adenosyl-L-methionine = a menaquinol + S-adenosyl-L-homocysteine + H(+). The catalysed reaction is a 2-methoxy-6-(all-trans-polyprenyl)benzene-1,4-diol + S-adenosyl-L-methionine = a 5-methoxy-2-methyl-3-(all-trans-polyprenyl)benzene-1,4-diol + S-adenosyl-L-homocysteine + H(+). It functions in the pathway quinol/quinone metabolism; menaquinone biosynthesis; menaquinol from 1,4-dihydroxy-2-naphthoate: step 2/2. The protein operates within cofactor biosynthesis; ubiquinone biosynthesis. Functionally, methyltransferase required for the conversion of demethylmenaquinol (DMKH2) to menaquinol (MKH2) and the conversion of 2-polyprenyl-6-methoxy-1,4-benzoquinol (DDMQH2) to 2-polyprenyl-3-methyl-6-methoxy-1,4-benzoquinol (DMQH2). The chain is Ubiquinone/menaquinone biosynthesis C-methyltransferase UbiE from Bartonella bacilliformis (strain ATCC 35685 / KC583 / Herrer 020/F12,63).